A 789-amino-acid polypeptide reads, in one-letter code: Cadherin-10 (789 aa).

An N-terminal signal peptide occupies residues 1–22; the sequence is MTIQQVLLLLLLWMWLLHPCRT. The propeptide occupies 23-54; that stretch reads EMLFRRTPDLRPKGFVGRTSGSDGKALHRQKR. 5 Cadherin domains span residues 55-160, 161-269, 270-384, 385-487, and 488-606; these read GWMW…EPTF, PEEI…PPRF, PQST…PPVF, SRSS…DNAP, and QFAV…LLLP. Residues 55-606 are Extracellular-facing; it reads GWMWNQFFLL…SCNAEALLLP (552 aa). N-linked (GlcNAc...) asparagine glycosylation is present at Asn256. 3 N-linked (GlcNAc...) asparagine glycosylation sites follow: Asn438, Asn456, and Asn534. The helical transmembrane segment at 607-634 threads the bilayer; sequence AGLSTGALIAILLCIIILLVIVVLFAAL. Topologically, residues 635 to 789 are cytoplasmic; it reads KRQRKKEPLI…GGGESDKDAS (155 aa).

Its subcellular location is the cell membrane. Cadherins are calcium-dependent cell adhesion proteins. They preferentially interact with themselves in a homophilic manner in connecting cells; cadherins may thus contribute to the sorting of heterogeneous cell types. This chain is Cadherin-10 (CDH10), found in Gallus gallus (Chicken).